Here is a 197-residue protein sequence, read N- to C-terminus: Ribosome maturation factor RimP (197 aa).

Belongs to the RimP family.

The protein resides in the cytoplasm. Required for maturation of 30S ribosomal subunits. The sequence is that of Ribosome maturation factor RimP from Acidovorax sp. (strain JS42).